Here is an 81-residue protein sequence, read N- to C-terminus: Small ribosomal subunit protein bS16 (81 aa).

Belongs to the bacterial ribosomal protein bS16 family.

In Acetivibrio thermocellus (strain ATCC 27405 / DSM 1237 / JCM 9322 / NBRC 103400 / NCIMB 10682 / NRRL B-4536 / VPI 7372) (Clostridium thermocellum), this protein is Small ribosomal subunit protein bS16.